A 315-amino-acid polypeptide reads, in one-letter code: Jacalin-related lectin 10 (315 aa).

An N-terminal signal peptide occupies residues 1 to 23 (MVIIYIFLFLSSAIIDSTGLAKA). Jacalin-type lectin domains lie at 24 to 165 (QKLD…YLTT) and 168 to 312 (PTKS…YFSP).

This sequence belongs to the jacalin lectin family.

In Arabidopsis thaliana (Mouse-ear cress), this protein is Jacalin-related lectin 10 (JAL10).